Reading from the N-terminus, the 205-residue chain is High frequency lysogenization protein HflD homolog (205 aa).

Belongs to the HflD family.

The protein resides in the cytoplasm. It localises to the cell inner membrane. In Shewanella halifaxensis (strain HAW-EB4), this protein is High frequency lysogenization protein HflD homolog.